Reading from the N-terminus, the 275-residue chain is NH(3)-dependent NAD(+) synthetase (275 aa).

Position 46 to 53 (46 to 53) interacts with ATP; sequence GISGGQDS. Aspartate 52 provides a ligand contact to Mg(2+). A deamido-NAD(+)-binding site is contributed by arginine 140. Threonine 160 contacts ATP. Glutamate 165 provides a ligand contact to Mg(2+). Deamido-NAD(+)-binding residues include lysine 173 and aspartate 180. Positions 189 and 211 each coordinate ATP. A deamido-NAD(+)-binding site is contributed by 260 to 261; sequence HK.

This sequence belongs to the NAD synthetase family. In terms of assembly, homodimer.

It catalyses the reaction deamido-NAD(+) + NH4(+) + ATP = AMP + diphosphate + NAD(+) + H(+). It participates in cofactor biosynthesis; NAD(+) biosynthesis; NAD(+) from deamido-NAD(+) (ammonia route): step 1/1. In terms of biological role, catalyzes the ATP-dependent amidation of deamido-NAD to form NAD. Uses ammonia as a nitrogen source. The sequence is that of NH(3)-dependent NAD(+) synthetase from Salmonella arizonae (strain ATCC BAA-731 / CDC346-86 / RSK2980).